Here is a 592-residue protein sequence, read N- to C-terminus: Aspartate--tRNA(Asp/Asn) ligase (592 aa).

Residue E172 participates in L-aspartate binding. Positions 196–199 (QLFK) are aspartate. R218 serves as a coordination point for L-aspartate. Residues 218–220 (RDE) and Q227 contribute to the ATP site. H442 is an L-aspartate binding site. E476 lines the ATP pocket. Residue R483 coordinates L-aspartate. Residue 528–531 (GWDR) coordinates ATP. A disordered region spans residues 553–592 (SGTDPLTGAPTPITPEQRKEAGIDADPYAAAGRPPGRQSA).

The protein belongs to the class-II aminoacyl-tRNA synthetase family. Type 1 subfamily. In terms of assembly, homodimer.

It is found in the cytoplasm. The enzyme catalyses tRNA(Asx) + L-aspartate + ATP = L-aspartyl-tRNA(Asx) + AMP + diphosphate. Its function is as follows. Aspartyl-tRNA synthetase with relaxed tRNA specificity since it is able to aspartylate not only its cognate tRNA(Asp) but also tRNA(Asn). Reaction proceeds in two steps: L-aspartate is first activated by ATP to form Asp-AMP and then transferred to the acceptor end of tRNA(Asp/Asn). The chain is Aspartate--tRNA(Asp/Asn) ligase from Acidothermus cellulolyticus (strain ATCC 43068 / DSM 8971 / 11B).